We begin with the raw amino-acid sequence, 181 residues long: ATP-dependent protease subunit HslV (181 aa).

Residue threonine 7 is part of the active site. Glycine 166, cysteine 169, and threonine 172 together coordinate Na(+).

Belongs to the peptidase T1B family. HslV subfamily. In terms of assembly, a double ring-shaped homohexamer of HslV is capped on each side by a ring-shaped HslU homohexamer. The assembly of the HslU/HslV complex is dependent on binding of ATP.

The protein resides in the cytoplasm. The catalysed reaction is ATP-dependent cleavage of peptide bonds with broad specificity.. Its activity is regulated as follows. Allosterically activated by HslU binding. Functionally, protease subunit of a proteasome-like degradation complex believed to be a general protein degrading machinery. The protein is ATP-dependent protease subunit HslV of Delftia acidovorans (strain DSM 14801 / SPH-1).